Here is a 382-residue protein sequence, read N- to C-terminus: D-galactonate dehydratase (382 aa).

Asp183 is a binding site for Mg(2+). Catalysis depends on His185, which acts as the Proton donor. Mg(2+) is bound by residues Glu209 and Glu235. His285 serves as the catalytic Proton acceptor.

This sequence belongs to the mandelate racemase/muconate lactonizing enzyme family. GalD subfamily. Requires Mg(2+) as cofactor.

It carries out the reaction D-galactonate = 2-dehydro-3-deoxy-D-galactonate + H2O. The protein operates within carbohydrate acid metabolism; D-galactonate degradation; D-glyceraldehyde 3-phosphate and pyruvate from D-galactonate: step 1/3. Its function is as follows. Catalyzes the dehydration of D-galactonate to 2-keto-3-deoxy-D-galactonate. The sequence is that of D-galactonate dehydratase from Escherichia fergusonii (strain ATCC 35469 / DSM 13698 / CCUG 18766 / IAM 14443 / JCM 21226 / LMG 7866 / NBRC 102419 / NCTC 12128 / CDC 0568-73).